A 305-amino-acid chain; its full sequence is Aspartate carbamoyltransferase catalytic subunit (305 aa).

Residues R52 and T53 each contribute to the carbamoyl phosphate site. Residue K80 participates in L-aspartate binding. The carbamoyl phosphate site is built by R102, H132, and Q135. Positions 165 and 217 each coordinate L-aspartate. Residues A258 and P259 each contribute to the carbamoyl phosphate site.

Belongs to the aspartate/ornithine carbamoyltransferase superfamily. ATCase family. In terms of assembly, heterododecamer (2C3:3R2) of six catalytic PyrB chains organized as two trimers (C3), and six regulatory PyrI chains organized as three dimers (R2).

The enzyme catalyses carbamoyl phosphate + L-aspartate = N-carbamoyl-L-aspartate + phosphate + H(+). It functions in the pathway pyrimidine metabolism; UMP biosynthesis via de novo pathway; (S)-dihydroorotate from bicarbonate: step 2/3. In terms of biological role, catalyzes the condensation of carbamoyl phosphate and aspartate to form carbamoyl aspartate and inorganic phosphate, the committed step in the de novo pyrimidine nucleotide biosynthesis pathway. This Latilactobacillus sakei subsp. sakei (strain 23K) (Lactobacillus sakei subsp. sakei) protein is Aspartate carbamoyltransferase catalytic subunit.